Here is a 209-residue protein sequence, read N- to C-terminus: Putative 3-methyladenine DNA glycosylase (209 aa).

It belongs to the DNA glycosylase MPG family.

In Deinococcus geothermalis (strain DSM 11300 / CIP 105573 / AG-3a), this protein is Putative 3-methyladenine DNA glycosylase.